Reading from the N-terminus, the 559-residue chain is Formate--tetrahydrofolate ligase (559 aa).

68–75 contributes to the ATP binding site; the sequence is TPAGEGKS.

The protein belongs to the formate--tetrahydrofolate ligase family.

It carries out the reaction (6S)-5,6,7,8-tetrahydrofolate + formate + ATP = (6R)-10-formyltetrahydrofolate + ADP + phosphate. It participates in one-carbon metabolism; tetrahydrofolate interconversion. This chain is Formate--tetrahydrofolate ligase, found in Clostridium tetani (strain Massachusetts / E88).